The following is a 714-amino-acid chain: BRCA1-associated RING domain protein 1 (714 aa).

The RING-type zinc-finger motif lies at 25-63 (CPLCLKLLNRPVLLPCDHVFCDSCVHKSSQVESGCPVCK). Disordered stretches follow at residues 106–165 (YKND…QDWT) and 254–283 (KAQN…DAME). Positions 118 to 134 (KHGESEDSEMTDKDVSK) are enriched in basic and acidic residues. The span at 135-147 (RSGGTDSSSRDGS) shows a compositional bias: low complexity. Composition is skewed to basic and acidic residues over residues 155–165 (SDPRPKHQDWT) and 264–283 (SHTE…DAME). The C2HC pre-PHD-type zinc-finger motif lies at 331-382 (ITICGFCQSARVSEATGEMLHYSRGRPVDGDDIFRSNVIHVHSACIEWAPQV). The PHD-type zinc-finger motif lies at 402-451 (IKCTKCSLKGAALGCFVKSCRRSYHVPCAREISRCRWDYEDFLLLCPAHS). BRCT domains follow at residues 482 to 577 (EQTP…PFEI) and 598 to 713 (NKPK…HPVI).

Component of a DNA-protein complex on WUS and WOX5 promoters. Interacts with SYD. Forms heterodimer with BRCA1. As to expression, expressed in the shoot apical meristem (SAM), roots, flowers, embryos and seedlings. Mostly expressed in flowers and siliques, and, to a lower extent, in roots, rosette leaves, inflorescence and young cauline leaves.

It is found in the nucleus. Its function is as follows. Binds specifically to H3K4me3 regions of target genes (e.g. WUS and WOX5) promoters to repress their transcription via chromatin remodeling. Required for the shoot apical meristem (SAM) organization and maintenance, by confining WUS expression to the organizing center, and for the quiescent center (QC) development in the root apical meristem (RAM), by repressing WOX5 expression in the root proximal meristem. Plays a role in DNA repair and in cell-cycle control. Required for the repair of DNA double-strand breaks (DSBs), both natural and induced by genotoxic stress, by homologous recombination (HR). The protein is BRCA1-associated RING domain protein 1 of Arabidopsis thaliana (Mouse-ear cress).